The sequence spans 152 residues: Protein-export protein SecB (152 aa).

Belongs to the SecB family. As to quaternary structure, homotetramer, a dimer of dimers. One homotetramer interacts with 1 SecA dimer.

Its subcellular location is the cytoplasm. One of the proteins required for the normal export of preproteins out of the cell cytoplasm. It is a molecular chaperone that binds to a subset of precursor proteins, maintaining them in a translocation-competent state. It also specifically binds to its receptor SecA. The polypeptide is Protein-export protein SecB (Thiobacillus denitrificans (strain ATCC 25259 / T1)).